The sequence spans 181 residues: UPF0302 protein lmo1921 (181 aa).

Belongs to the UPF0302 family.

This is UPF0302 protein lmo1921 from Listeria monocytogenes serovar 1/2a (strain ATCC BAA-679 / EGD-e).